We begin with the raw amino-acid sequence, 244 residues long: 5-oxoprolinase subunit A (244 aa).

It belongs to the LamB/PxpA family. As to quaternary structure, forms a complex composed of PxpA, PxpB and PxpC.

The enzyme catalyses 5-oxo-L-proline + ATP + 2 H2O = L-glutamate + ADP + phosphate + H(+). Catalyzes the cleavage of 5-oxoproline to form L-glutamate coupled to the hydrolysis of ATP to ADP and inorganic phosphate. The chain is 5-oxoprolinase subunit A from Salmonella paratyphi A (strain ATCC 9150 / SARB42).